The sequence spans 230 residues: Porin OmpL (230 aa).

The first 20 residues, 1 to 20, serve as a signal peptide directing secretion; sequence MKSLNTLVILTSVISTSVFA.

Belongs to the oligogalacturonate-specific porin KdgM (TC 1.B.35) family. OmpL subfamily.

It localises to the cell outer membrane. Functionally, outer membrane channel protein that allows an efficient diffusion of low-molecular-weight solutes such as small sugars and tetraglycine. However, the specific substrate recognized by the OmpL channel is unknown. The sequence is that of Porin OmpL (ompL) from Salmonella paratyphi A (strain ATCC 9150 / SARB42).